We begin with the raw amino-acid sequence, 184 residues long: Autophagy-related protein 101 (184 aa).

This sequence belongs to the ATG101 family. As to quaternary structure, component of the atg1 kinase complex composed of at least atg1, atg13, atg17 and atg101. Interacts directly with atg13.

Its subcellular location is the cytoplasm. It localises to the nucleus. The protein resides in the preautophagosomal structure membrane. Its function is as follows. Autophagy factor required for autophagosome formation. Component of the atg1 kinase complex in which it stabilizes atg13. Is also responsible for recruiting downstream factors to the autophagosome-formation site. Has a role in meiosis and sporulation. The protein is Autophagy-related protein 101 of Schizosaccharomyces pombe (strain 972 / ATCC 24843) (Fission yeast).